Reading from the N-terminus, the 408-residue chain is Putative FBD-associated F-box protein At5g50270 (408 aa).

Residues 1–54 form the F-box domain; sequence MDRISGLPDELLLRVLSLLPNVKDVVVTMVLSKRWQFLWMMVPKLVYDDSYQNL. The FBD domain occupies 345–408; it reads PLRDDLSSVP…VNPDKKYEMI (64 aa).

The sequence is that of Putative FBD-associated F-box protein At5g50270 from Arabidopsis thaliana (Mouse-ear cress).